We begin with the raw amino-acid sequence, 288 residues long: Pantothenate synthetase (288 aa).

30-37 (MGNLHAGH) contacts ATP. His37 serves as the catalytic Proton donor. Gln61 lines the (R)-pantoate pocket. Gln61 lines the beta-alanine pocket. 149–152 (GLKD) is a binding site for ATP. Gln155 is a binding site for (R)-pantoate. Residues Ile178 and 186–189 (LSSR) each bind ATP.

This sequence belongs to the pantothenate synthetase family. As to quaternary structure, homodimer.

It localises to the cytoplasm. It carries out the reaction (R)-pantoate + beta-alanine + ATP = (R)-pantothenate + AMP + diphosphate + H(+). It functions in the pathway cofactor biosynthesis; (R)-pantothenate biosynthesis; (R)-pantothenate from (R)-pantoate and beta-alanine: step 1/1. Its function is as follows. Catalyzes the condensation of pantoate with beta-alanine in an ATP-dependent reaction via a pantoyl-adenylate intermediate. This is Pantothenate synthetase from Colwellia psychrerythraea (strain 34H / ATCC BAA-681) (Vibrio psychroerythus).